Here is a 181-residue protein sequence, read N- to C-terminus: Der GTPase-activating protein YihI (181 aa).

Positions 1–73 (MSRIKKARKP…DPRIGSKKPI (73 aa)) are disordered. The segment covering 22–32 (NRTDRDVESRE) has biased composition (basic and acidic residues). Over residues 33–42 (IKRKRKRKGL) the composition is skewed to basic residues. The segment covering 55–67 (QARRNAQKKDPRI) has biased composition (basic and acidic residues).

It belongs to the YihI family. Interacts with Der.

Functionally, a GTPase-activating protein (GAP) that modifies Der/EngA GTPase function. May play a role in ribosome biogenesis. This chain is Der GTPase-activating protein YihI, found in Aliivibrio fischeri (strain ATCC 700601 / ES114) (Vibrio fischeri).